The following is a 509-amino-acid chain: 2,3-bisphosphoglycerate-independent phosphoglycerate mutase (509 aa).

Asp-11 serves as a coordination point for Mn(2+). Phosphotyrosine is present on Tyr-35. Ser-61 lines the Mn(2+) pocket. The active-site Phosphoserine intermediate is Ser-61. Substrate is bound by residues His-122, 152–153, Arg-184, Arg-190, 260–263, and Lys-335; these read RD and RPDR. Mn(2+) contacts are provided by Asp-402, His-406, Asp-443, His-444, and His-461.

The protein belongs to the BPG-independent phosphoglycerate mutase family. As to quaternary structure, monomer. The cofactor is Mn(2+).

It carries out the reaction (2R)-2-phosphoglycerate = (2R)-3-phosphoglycerate. It participates in carbohydrate degradation; glycolysis; pyruvate from D-glyceraldehyde 3-phosphate: step 3/5. Functionally, essential for rapid growth and for sporulation. Catalyzes the interconversion of 2-phosphoglycerate and 3-phosphoglycerate. The protein is 2,3-bisphosphoglycerate-independent phosphoglycerate mutase of Bacillus cereus (strain ATCC 14579 / DSM 31 / CCUG 7414 / JCM 2152 / NBRC 15305 / NCIMB 9373 / NCTC 2599 / NRRL B-3711).